The chain runs to 200 residues: Ribonuclease T2 (200 aa).

Cysteine 17 and cysteine 22 are oxidised to a cystine. Residue histidine 32 is part of the active site. An intrachain disulfide couples cysteine 42 to cysteine 89. N-linked (GlcNAc...) asparagine glycans are attached at residues asparagine 43 and asparagine 73. Active-site residues include glutamate 82 and histidine 86. Asparagine 116 is a glycosylation site (N-linked (GlcNAc...) asparagine). Cystine bridges form between cysteine 152-cysteine 188 and cysteine 170-cysteine 180.

It belongs to the RNase T2 family.

It localises to the secreted. The protein localises to the lysosome lumen. It is found in the endoplasmic reticulum lumen. The protein resides in the mitochondrion intermembrane space. It catalyses the reaction a ribonucleotidyl-ribonucleotide-RNA + H2O = a 3'-end 3'-phospho-ribonucleotide-RNA + a 5'-end dephospho-ribonucleoside-RNA + H(+). The enzyme catalyses an adenylyl-uridine-RNA = a 3'-end 2',3'-cyclophospho-AMP-RNA + a 5'-end dephospho-uridine-RNA. It carries out the reaction a guanylyl-uridine-RNA = a 3'-end 2',3'-cyclophospho-GMP-RNA + a 5'-end dephospho-uridine-RNA. Its activity is regulated as follows. Inhibited by Zn(2+) and Cu(2+). Functionally, ribonuclease that plays an essential role in innate immune response by recognizing and degrading RNAs from microbial pathogens that are subsequently sensed by TLR8. Cleaves preferentially single-stranded RNA molecules between purine and uridine residues, which critically contributes to the supply of catabolic uridine and the generation of purine-2',3'-cyclophosphate-terminated oligoribonucleotides. In turn, RNase T2 degradation products promote the RNA-dependent activation of TLR8. In plasmacytoid dendritic cells, it cooperates with PLD3 or PLD4 5'-&gt;3' exonucleases to process RNA fragments and release 2',3'-cyclic guanosine monophosphate (2',3'-cGMP), a potent stimulatory ligand for TLR7. Also plays a key role in degradation of mitochondrial RNA and processing of non-coding RNA imported from the cytosol into mitochondria. Participates as well in degradation of mitochondrion-associated cytosolic rRNAs. This is Ribonuclease T2 (RNASET2) from Sus scrofa (Pig).